Reading from the N-terminus, the 480-residue chain is Glutamyl-tRNA(Gln) amidotransferase subunit A (480 aa).

Active-site charge relay system residues include Lys-70 and Ser-145. Ser-169 functions as the Acyl-ester intermediate in the catalytic mechanism.

This sequence belongs to the amidase family. GatA subfamily. Heterotrimer of A, B and C subunits.

It catalyses the reaction L-glutamyl-tRNA(Gln) + L-glutamine + ATP + H2O = L-glutaminyl-tRNA(Gln) + L-glutamate + ADP + phosphate + H(+). Functionally, allows the formation of correctly charged Gln-tRNA(Gln) through the transamidation of misacylated Glu-tRNA(Gln) in organisms which lack glutaminyl-tRNA synthetase. The reaction takes place in the presence of glutamine and ATP through an activated gamma-phospho-Glu-tRNA(Gln). The protein is Glutamyl-tRNA(Gln) amidotransferase subunit A of Lactobacillus delbrueckii subsp. bulgaricus (strain ATCC BAA-365 / Lb-18).